The following is a 168-amino-acid chain: MNEQTSRLNRERRFLVLLGLICLSLIGGALYMQVVLGEAPCPLCILQRYALLFIAVFAFIAAAMPGRRSLTFFEALVVLSAIGGIVAAGNHVYILANPMVSCGIDTLQPIVDDLPLAKLWPLAFQVDGFCSTPYPPILGLSLAQWALVAFVLTAVLVPLGIYRNRRQA.

The Cytoplasmic portion of the chain corresponds to 1-14 (MNEQTSRLNRERRF). Residues 15–31 (LVLLGLICLSLIGGALY) form a helical membrane-spanning segment. At 32-49 (MQVVLGEAPCPLCILQRY) the chain is on the periplasmic side. A disulfide bridge connects residues C41 and C44. Residues 50 to 65 (ALLFIAVFAFIAAAMP) traverse the membrane as a helical segment. Topologically, residues 66-72 (GRRSLTF) are cytoplasmic. Residues 73-89 (FEALVVLSAIGGIVAAG) traverse the membrane as a helical segment. Over 90 to 144 (NHVYILANPMVSCGIDTLQPIVDDLPLAKLWPLAFQVDGFCSTPYPPILGLSLAQ) the chain is Periplasmic. Cysteines 102 and 130 form a disulfide. The helical transmembrane segment at 145–163 (WALVAFVLTAVLVPLGIYR) threads the bilayer. At 164-168 (NRRQA) the chain is on the cytoplasmic side.

Belongs to the DsbB family.

Its subcellular location is the cell inner membrane. Required for disulfide bond formation in some periplasmic proteins. Acts by oxidizing the DsbA protein. This is Disulfide bond formation protein B 1 (dsbB1) from Pseudomonas putida (strain ATCC 47054 / DSM 6125 / CFBP 8728 / NCIMB 11950 / KT2440).